The sequence spans 463 residues: NADH dehydrogenase [ubiquinone] iron-sulfur protein 2, mitochondrial (463 aa).

A mitochondrion-targeting transit peptide spans 1-33 (MAALRALCRLRGAAAQVLRPGAGVRLPIQPSRG). Position 62 is an N6-acetyllysine (K62). A Symmetric dimethylarginine modification is found at R118. 3 residues coordinate [4Fe-4S] cluster: C326, C332, and C347.

This sequence belongs to the complex I 49 kDa subunit family. In terms of assembly, core subunit of respiratory chain NADH dehydrogenase (Complex I) which is composed of 45 different subunits. Component of the iron-sulfur (IP) fragment of the enzyme. Interacts with NDUFAF3. Interacts with NDUFAF7. Interacts with CERS2. [4Fe-4S] cluster is required as a cofactor. Post-translationally, dimethylation at Arg-118 by NDUFAF7 takes place after NDUFS2 assembles into the complex I, leading to stabilize the early intermediate complex.

The protein localises to the mitochondrion inner membrane. The catalysed reaction is a ubiquinone + NADH + 5 H(+)(in) = a ubiquinol + NAD(+) + 4 H(+)(out). Functionally, core subunit of the mitochondrial membrane respiratory chain NADH dehydrogenase (Complex I) which catalyzes electron transfer from NADH through the respiratory chain, using ubiquinone as an electron acceptor. Essential for the catalytic activity and assembly of complex I. Redox-sensitive, critical component of the oxygen-sensing pathway in the pulmonary vasculature which plays a key role in acute pulmonary oxygen-sensing and hypoxic pulmonary vasoconstriction. Plays an important role in carotid body sensing of hypoxia. Essential for glia-like neural stem and progenitor cell proliferation, differentiation and subsequent oligodendrocyte or neuronal maturation. The chain is NADH dehydrogenase [ubiquinone] iron-sulfur protein 2, mitochondrial (NDUFS2) from Bos taurus (Bovine).